We begin with the raw amino-acid sequence, 932 residues long: Calpain-like protease palB/cpr-8 (932 aa).

Residues 96–419 (KLHGNIFPPW…FDSLYVNWSP (324 aa)) enclose the Calpain catalytic domain. Active-site residues include cysteine 178, histidine 346, and asparagine 366. Residues 890-932 (QGHVTEGSDDDGGGGGGGGGGVHVEISSDGVVSIGEWEVADED) are disordered. The span at 902–911 (GGGGGGGGGV) shows a compositional bias: gly residues.

It belongs to the peptidase C2 family. PalB/RIM13 subfamily.

Its function is as follows. Required for the proteolytic cleavage of the transcription factor pacc-1 in response to alkaline ambient pH. The polypeptide is Calpain-like protease palB/cpr-8 (cpr-8) (Neurospora crassa (strain ATCC 24698 / 74-OR23-1A / CBS 708.71 / DSM 1257 / FGSC 987)).